The primary structure comprises 265 residues: 4-diphosphocytidyl-2-C-methyl-D-erythritol kinase (265 aa).

Residue lysine 8 is part of the active site. 95–105 (PIGAGLGGGSS) is a binding site for ATP. Aspartate 135 is an active-site residue.

This sequence belongs to the GHMP kinase family. IspE subfamily.

The enzyme catalyses 4-CDP-2-C-methyl-D-erythritol + ATP = 4-CDP-2-C-methyl-D-erythritol 2-phosphate + ADP + H(+). Its pathway is isoprenoid biosynthesis; isopentenyl diphosphate biosynthesis via DXP pathway; isopentenyl diphosphate from 1-deoxy-D-xylulose 5-phosphate: step 3/6. In terms of biological role, catalyzes the phosphorylation of the position 2 hydroxy group of 4-diphosphocytidyl-2C-methyl-D-erythritol. This Ureaplasma parvum serovar 3 (strain ATCC 27815 / 27 / NCTC 11736) protein is 4-diphosphocytidyl-2-C-methyl-D-erythritol kinase.